The following is a 181-amino-acid chain: Oligoribonuclease (181 aa).

One can recognise an Exonuclease domain in the interval 8 to 171 (LIWIDLEMTG…QDIQESIAEL (164 aa)). The active site involves tyrosine 129.

The protein belongs to the oligoribonuclease family.

The protein resides in the cytoplasm. In terms of biological role, 3'-to-5' exoribonuclease specific for small oligoribonucleotides. The polypeptide is Oligoribonuclease (Shewanella oneidensis (strain ATCC 700550 / JCM 31522 / CIP 106686 / LMG 19005 / NCIMB 14063 / MR-1)).